The primary structure comprises 204 residues: Phosphoribosyl-dephospho-CoA transferase (204 aa).

Catalysis depends on residues Asp129 and Asp131.

It belongs to the MdcG family.

It catalyses the reaction apo-[malonate decarboxylase ACP] + 2'-(5''-triphospho-alpha-D-ribosyl)-3'-dephospho-CoA = holo-[malonate decarboxylase ACP] + diphosphate. Its function is as follows. Transfers 2'-(5-triphosphoribosyl)-3'-dephosphocoenzyme-A to the apo-[acyl-carrier-protein] of the malonate decarboxylase to yield holo-[acyl-carrier-protein]. This is Phosphoribosyl-dephospho-CoA transferase from Pseudomonas putida (strain W619).